Reading from the N-terminus, the 1066-residue chain is MAESVPIPEPPGYPLIGNLGEFTSNPLSDLNRLADTYGPIFRLRLGAKAPIFVSSNSLINEVCDEKRFKKTLKSVLSQVREGVHDGLFTAFEDEPNWGKAHRILVPAFGPLSIRGMFPEMHDIATQLCMKFARHGPRTPIDTSDNFTRLALDTLALCAMDFRFYSYYKEELHPFIEAMGDFLTESGNRNRRPPFAPNFLYRAANEKFYGDIALMKSVADEVVAARKASPSDRKDLLAAMLNGVDPQTGEKLSDENITNQLITFLIAGHETTSGTLSFAMYQLLKNPEAYSKVQKEVDEVVGRGPVLVEHLTKLPYISAVLRETLRLNSPITAFGLEAIDDTFLGGKYLVKKGEIVTALLSRGHVDPVVYGNDADKFIPERMLDDEFARLNKEYPNCWKPFGNGKRACIGRPFAWQESLLAMVVLFQNFNFTMTDPNYALEIKQTLTIKPDHFYINATLRHGMTPTELEHVLAGNGATSSSTHNIKAAANLDAKAGSGKPMAIFYGSNSGTCEALANRLASDAPSHGFSATTVGPLDQAKQNLPEDRPVVIVTASYEGQPPSNAAHFIKWMEDLDGNDMEKVSYAVFACGHHDWVETFHRIPKLVDSTLEKRGGTRLVPMGSADAATSDMFSDFEAWEDIVLWPGLKEKYKISDEESGGQKGLLVEVSTPRKTSLRQDVEEALVVAEKTLTKSGPAKKHIEIQLPSAMTYKAGDYLAILPLNPKSTVARVFRRFSLAWDSFLKIQSEGPTTLPTNVAISAFDVFSAYVELSQPATKRNILALAEATEDKDTIQELERLAGDAYQAEISPKRVSVLDLLEKFPAVALPISSYLAMLPPMRVRQYSISSSPFADPSKLTLTYSLLDAPSLSGQGRHVGVATNFLSHLTAGDKLHVSVRASSEAFHLPSDAEKTPIICVAAGTGLAPLRGFIQERAAMLAAGRTLAPALLFFGCRNPEIDDLYAEEFERWEKMGAVDVRRAYSRATDKSEGCKYVQDRVYHDRADVFKVWDQGAKVFICGSREIGKAVEDVCVRLAIEKAQQNGRDVTEEMARAWFERSRNERFATDVFD.

Residues 1-480 (MAESVPIPEP…LAGNGATSSS (480 aa)) form a cytochrome P450 region. Cys407 is a heme binding site. Residues 481–1066 (THNIKAAANL…NERFATDVFD (586 aa)) form an NADPH-P-450 reductase region. Residues 500 to 641 (MAIFYGSNSG…DFEAWEDIVL (142 aa)) enclose the Flavodoxin-like domain. FMN-binding positions include 506 to 511 (SNSGTC), 554 to 557 (SYEG), Cys588, and Thr596. In terms of domain architecture, FAD-binding FR-type spans 676 to 904 (QDVEEALVVA…RASSEAFHLP (229 aa)).

This sequence in the N-terminal section; belongs to the cytochrome P450 family. FAD serves as cofactor. It depends on FMN as a cofactor. Requires heme as cofactor.

The protein localises to the membrane. The enzyme catalyses an organic molecule + reduced [NADPH--hemoprotein reductase] + O2 = an alcohol + oxidized [NADPH--hemoprotein reductase] + H2O + H(+). It carries out the reaction 2 oxidized [cytochrome P450] + NADPH = 2 reduced [cytochrome P450] + NADP(+) + H(+). Its activity is regulated as follows. Stimulated NADPH--cytochrome reductase activity in the presence of substrate. Inhibited by fatty acid substrates longer than 13 carbons and the degree of inhibition increases with increasing chain length. Functionally, functions as a fatty acid monooxygenase. Catalyzes hydroxylation of fatty acids at omega-1, omega-2 and omega-3 positions. Shows activity toward fatty acids with a chain length of 9-18 carbons with optimum chain lengths of 12-14 carbons (lauric, tridecylic and myristic acids). Can also use shorter saturated fatty acids with a chain length of 9 or 10 carbons as substrates. Also displays a NADPH-dependent reductase activity in the C-terminal domain, which allows electron transfer from NADPH to the heme iron of the cytochrome P450 N-terminal domain. This is Bifunctional cytochrome P450/NADPH--P450 reductase from Fusarium oxysporum (Fusarium vascular wilt).